Reading from the N-terminus, the 359-residue chain is MATH domain and coiled-coil domain-containing protein At2g42475 (359 aa).

The MATH domain occupies 6–128 (KTSFTFEIEN…NDKLIITVEV (123 aa)). Residues 146-337 (EFKELQDLYN…NLELMVLDFK (192 aa)) are a coiled coil.

The protein is MATH domain and coiled-coil domain-containing protein At2g42475 of Arabidopsis thaliana (Mouse-ear cress).